A 354-amino-acid chain; its full sequence is Methionine import ATP-binding protein MetN (354 aa).

Residues Leu-8–Ile-250 form the ABC transporter domain. Residue Gly-42–Ser-49 participates in ATP binding.

This sequence belongs to the ABC transporter superfamily. Methionine importer (TC 3.A.1.24) family. In terms of assembly, the complex is composed of two ATP-binding proteins (MetN), two transmembrane proteins (MetI) and a solute-binding protein (MetQ).

The protein localises to the cell membrane. It catalyses the reaction L-methionine(out) + ATP + H2O = L-methionine(in) + ADP + phosphate + H(+). The enzyme catalyses D-methionine(out) + ATP + H2O = D-methionine(in) + ADP + phosphate + H(+). Part of the ABC transporter complex MetNIQ involved in methionine import. Responsible for energy coupling to the transport system. The polypeptide is Methionine import ATP-binding protein MetN (Streptococcus pyogenes serotype M12 (strain MGAS2096)).